Consider the following 305-residue polypeptide: P2Y purinoceptor 14 (305 aa).

Over 1-29 the chain is Extracellular; the sequence is MDNTTTTEPPKQPCTRNTLITQQIIPMLY. Asparagine 3 is a glycosylation site (N-linked (GlcNAc...) asparagine). A helical membrane pass occupies residues 30–50; sequence CVVFITGVLLNGISGWIFFYV. At 51 to 55 the chain is on the cytoplasmic side; the sequence is PSSKS. Residues 56–76 traverse the membrane as a helical segment; that stretch reads FIIYLKNIVVADFLMGLTFPF. Residues 77-96 are Extracellular-facing; it reads KVLSDSGLGPWQLNVFVFRV. Residues 97–117 form a helical membrane-spanning segment; that stretch reads SAVIFYVNMYVSIAFFGLISF. Residues 118–139 are Cytoplasmic-facing; it reads DRYYKIVKPLLVSIVQSVNYSK. The chain crosses the membrane as a helical span at residues 140–160; it reads VLSVLVWVLMLLLAVPNIILT. An N-linked (GlcNAc...) asparagine glycan is attached at asparagine 161. The Extracellular portion of the chain corresponds to 161–188; it reads NQSVKDVTNIQCMELKNELGRKWHKASN. Residues 189 to 209 form a helical membrane-spanning segment; that stretch reads YVFVSIFWIVFLLLTVFYMAI. At 210 to 234 the chain is on the cytoplasmic side; sequence TRKIFKSHLKSRKNSISVKRKSSRN. Residues 235–255 form a helical membrane-spanning segment; it reads IFSIVLAFVACFAPYHVARIP. Topologically, residues 256–278 are extracellular; the sequence is YTKSQTEGHYSCQAKETLLYTKE. The chain crosses the membrane as a helical span at residues 279 to 299; that stretch reads FTLLLSAANVCLDPISISSYA. The Cytoplasmic segment spans residues 300-305; that stretch reads SRLEKS.

This sequence belongs to the G-protein coupled receptor 1 family.

Its subcellular location is the cell membrane. Receptor for UDP-glucose coupled to G-proteins. This is P2Y purinoceptor 14 (P2ry14) from Rattus norvegicus (Rat).